The sequence spans 434 residues: Zinc carboxypeptidase (434 aa).

The first 33 residues, 1 to 33, serve as a signal peptide directing secretion; that stretch reads MSPKRRRLMAAALGACVALVLPLHAGSAQPSTA. Residues 34 to 114 constitute a propeptide, activation peptide; the sequence is KTPERTVFEV…DFTDPQVGTQ (81 aa). One can recognise a Peptidase M14 domain in the interval 122 to 423; the sequence is GYHNFQETVT…SAVELFLSYS (302 aa). Histidine 183 and glutamate 186 together coordinate Zn(2+). The interval 270–295 is disordered; that stretch reads GSSSSGSSETTAARRRSPPRRSPHPH. Residues 282–293 are compositionally biased toward basic residues; the sequence is ARRRSPPRRSPH. Histidine 315 serves as a coordination point for Zn(2+). Glutamate 388 serves as the catalytic Proton donor/acceptor.

It belongs to the peptidase M14 family. Zn(2+) is required as a cofactor.

It carries out the reaction Releases a C-terminal residue, which may be hydrophobic or positively charged.. In terms of biological role, carboxypeptidase that possesses the specificities of both mammalian Cpase A and B. Thus shows broad substrate specificity, being able to cleave Cbz-Gly-Leu, Cbz-Gly-Val, Cbz-Gly-Phe, Cbz-Gly-Lys and Bz-Gly-Arg in vitro. The polypeptide is Zinc carboxypeptidase (Saccharothrix mutabilis subsp. capreolus (Streptomyces capreolus)).